Consider the following 113-residue polypeptide: Small ribosomal subunit protein bS6 (113 aa).

The protein belongs to the bacterial ribosomal protein bS6 family.

Its function is as follows. Binds together with bS18 to 16S ribosomal RNA. This Buchnera aphidicola subsp. Acyrthosiphon pisum (strain APS) (Acyrthosiphon pisum symbiotic bacterium) protein is Small ribosomal subunit protein bS6 (rpsF).